Reading from the N-terminus, the 224-residue chain is Cytidylate kinase (224 aa).

Position 11–19 (11–19 (GPAAAGKST)) interacts with ATP.

This sequence belongs to the cytidylate kinase family. Type 1 subfamily.

The protein localises to the cytoplasm. The enzyme catalyses CMP + ATP = CDP + ADP. It carries out the reaction dCMP + ATP = dCDP + ADP. The chain is Cytidylate kinase from Bacillus velezensis (strain DSM 23117 / BGSC 10A6 / LMG 26770 / FZB42) (Bacillus amyloliquefaciens subsp. plantarum).